A 430-amino-acid polypeptide reads, in one-letter code: Nucleoporin NUP42 (430 aa).

Residues 1–68 (MSAFGNPFTS…AFGMPQFGTN (68 aa)) are disordered. The SXFG 1 repeat unit spans residues 2–5 (SAFG). A compositionally biased stretch (polar residues) spans 15–36 (NLSNTSGINPFTNNAASTNNMG). 2 SAFGXPXFG repeats span residues 38 to 46 (SAFGRPSFG) and 58 to 66 (SAFGMPQFG). The span at 45-68 (FGTANTMTGGTTTSAFGMPQFGTN) shows a compositional bias: low complexity. An SXFG 2 repeat occupies 78 to 81 (SAFG). SAFGXPXFG repeat units lie at residues 90-98 (SAFGAPAFG) and 112-120 (SAFGAPSFG). The interactions with CRM1 and GFD1 stretch occupies residues 121–230 (STGFGAMAAT…QNTSTSSGTG (110 aa)). FG repeat units lie at residues 124–125 (FG) and 134–135 (FG). S137 bears the Phosphoserine mark. Residues 143-151 (SAFGQPAFG) form an SAFGXPXFG 5 repeat. SXFG repeat units lie at residues 168–171 (SAFG) and 182–185 (SPFG). The segment at 180–294 (TTSPFGSLQQ…QSPFSGGSGG (115 aa)) is disordered. Residues 186-201 (SLQQNASQNASSTSSA) are compositionally biased toward low complexity. Residues 200–208 (SAFGKPTFG) form an SAFGXPXFG 6 repeat. A compositionally biased stretch (polar residues) spans 209–230 (AATNTQSPFGTIQNTSTSSGTG). SXFG repeat units lie at residues 215 to 218 (SPFG) and 232 to 235 (SPFG). Polar residues-rich tracts occupy residues 237–252 (FGTN…NLQS) and 260–285 (PFGT…TNNQ). SXFG repeat units follow at residues 259-262 (SPFG) and 277-280 (SAFG). The stretch at 296 to 297 (FG) is one FG 3 repeat. S298 carries the post-translational modification Phosphoserine. One copy of the SXFG 9 repeat lies at 312 to 315 (SSFG). FG repeat units follow at residues 319-322 (FSFG), 339-340 (FG), and 361-364 (FGFG). Residues 319-346 (FSFGITPQNDANKVSQSNPSFGQTMPNT) are disordered. Polar residues predominate over residues 323 to 346 (ITPQNDANKVSQSNPSFGQTMPNT). The interaction with GLE1 stretch occupies residues 365 to 430 (QQQMNATNVN…DIPPPPALVA (66 aa)).

Component of the nuclear pore complex (NPC). NPC constitutes the exclusive means of nucleocytoplasmic transport. NPCs allow the passive diffusion of ions and small molecules and the active, nuclear transport receptor-mediated bidirectional transport of macromolecules such as proteins, RNAs, ribonucleoparticles (RNPs), and ribosomal subunits across the nuclear envelope. Due to its 8-fold rotational symmetry, all subunits are present with 8 copies or multiples thereof. NUP42 interacts with the NUP82 subcomplex. It interacts directly with GLE1, and through its FG repeats with GFD1, the heterodimeric mRNA transport factor MEX67/MTR2, and the karyopherin CRM1.

It is found in the nucleus. It localises to the nuclear pore complex. The protein resides in the nucleus membrane. Its function is as follows. Functions as a component of the nuclear pore complex (NPC). NPC components, collectively referred to as nucleoporins (NUPs), can play the role of both NPC structural components and of docking or interaction partners for transiently associated nuclear transport factors. Active directional transport is assured by both, a Phe-Gly (FG) repeat affinity gradient for these transport factors across the NPC and a transport cofactor concentration gradient across the nuclear envelope (GSP1 and GSP2 GTPases associated predominantly with GTP in the nucleus, with GDP in the cytoplasm). NUP42 is specifically important for nuclear protein and mRNA export. This is Nucleoporin NUP42 (NUP42) from Saccharomyces cerevisiae (strain ATCC 204508 / S288c) (Baker's yeast).